A 392-amino-acid polypeptide reads, in one-letter code: Putative nickel insertion protein (392 aa).

It belongs to the LarC family.

The protein is Putative nickel insertion protein of Methanothrix thermoacetophila (strain DSM 6194 / JCM 14653 / NBRC 101360 / PT) (Methanosaeta thermophila).